Consider the following 499-residue polypeptide: Phenylalanine--tRNA ligase alpha subunit (499 aa).

L-phenylalanine is bound by residues threonine 342, 381–383 (QID), and phenylalanine 422. Residue glutamate 424 participates in Mg(2+) binding. Phenylalanine 447 is an L-phenylalanine binding site.

It belongs to the class-II aminoacyl-tRNA synthetase family. Phe-tRNA synthetase alpha subunit type 2 subfamily. Tetramer of two alpha and two beta subunits. Requires Mg(2+) as cofactor.

It localises to the cytoplasm. It carries out the reaction tRNA(Phe) + L-phenylalanine + ATP = L-phenylalanyl-tRNA(Phe) + AMP + diphosphate + H(+). The protein is Phenylalanine--tRNA ligase alpha subunit of Thermococcus gammatolerans (strain DSM 15229 / JCM 11827 / EJ3).